The chain runs to 790 residues: Ribosome biogenesis protein ERB1 (790 aa).

The interval 1–93 (MAKKNTVTGS…SDELQDDSNS (93 aa)) is disordered. Acidic residues predominate over residues 20–89 (SPEVSESEEI…SEDFSDELQD (70 aa)). The interval 255 to 371 (RFVPSKHEAK…LRKVPAYQEN (117 aa)) is required for interaction with NOP7. The required for interaction with YTM1 stretch occupies residues 371 to 407 (NLRERFERSLDLYLAPRVRHNKLNIDPDSLIPDLPSP). WD repeat units lie at residues 423-462 (GHIG…QVYH), 470-510 (KDDD…YEIE), 574-616 (QCRK…SQSP), 619-657 (KSKG…LTKK), 660-699 (PGAR…TPYK), 703-743 (YHEK…DLMT), and 759-790 (VHSL…LWTT).

It belongs to the WD repeat BOP1/ERB1 family. As to quaternary structure, component of the NOP7 complex, composed of ERB1, NOP7 and YTM1. The complex is held together by ERB1, which interacts with NOP7 via its N-terminal domain and with YTM1 via a high-affinity interaction between the seven-bladed beta-propeller domains of the 2 proteins. The NOP7 complex associates with the 66S pre-ribosome.

The protein resides in the nucleus. It localises to the nucleolus. Its subcellular location is the nucleoplasm. Functionally, component of the NOP7 complex, which is required for maturation of the 25S and 5.8S ribosomal RNAs and formation of the 60S ribosome. The chain is Ribosome biogenesis protein ERB1 from Meyerozyma guilliermondii (strain ATCC 6260 / CBS 566 / DSM 6381 / JCM 1539 / NBRC 10279 / NRRL Y-324) (Yeast).